Here is a 150-residue protein sequence, read N- to C-terminus: MLSALALSTSSLCLSRYPLRASTVFLASSNIPFPSVSASLARPVATSAIPERPDLLMSPHGGLKAMMYLPLTNSLHQSTCSWLTGPRGFSSPPLFRIRFLLLIMSDSISLTDITISPGTLYSARTLLLRAAVLALTRKPMSFLHFKAACW.

The apoptotic activity stretch occupies residues 93 to 140 (PLFRIRFLLLIMSDSISLTDITISPGTLYSARTLLLRAAVLALTRKPM).

Disrupts the host mitochondrial membrane potential and induces apoptosis probably by inducing host CASP8 and CASP9. The polypeptide is Non-structural protein (Bos taurus (Bovine)).